A 91-amino-acid polypeptide reads, in one-letter code: YcgL domain-containing protein Ent638_2370 (91 aa).

Positions 1–85 (MFCVIYRSAK…PPENLLKQHL (85 aa)) constitute a YcgL domain.

In Enterobacter sp. (strain 638), this protein is YcgL domain-containing protein Ent638_2370.